A 188-amino-acid chain; its full sequence is Putative manganese efflux pump MntP (188 aa).

Helical transmembrane passes span 3-23, 41-61, 62-82, 107-129, 143-163, and 168-188; these read LSAT…ASIG, LIFG…GMLA, SQFI…FLGG, LLVT…LAFL, ATFI…PLLG, and ILGG…HFAG.

This sequence belongs to the MntP (TC 9.B.29) family.

It is found in the cell inner membrane. Functionally, probably functions as a manganese efflux pump. The polypeptide is Putative manganese efflux pump MntP (Klebsiella pneumoniae subsp. pneumoniae (strain ATCC 700721 / MGH 78578)).